The sequence spans 81 residues: MPLSDWCCGICEEAPLGRAYTQTWMETGCGPHGVTALGQQELKDCLRARSGGTASSVDWIMEAARGSLNVHNCLIKFGRRD.

3 disulfide bridges follow: C7-C73, C8-C29, and C11-C45.

In terms of tissue distribution, expressed in placenta, heart, lung, liver, pancreas, skeletal muscle and brain.

The protein resides in the cytoplasm. This Homo sapiens (Human) protein is Putative chemokine-related protein B42.